A 302-amino-acid chain; its full sequence is Ribosomal RNA small subunit methyltransferase A (302 aa).

Residues H15, L17, G42, E64, D89, and N109 each contribute to the S-adenosyl-L-methionine site. The segment at 275-302 (DAASADGHDHGDGSGQGESSPGGARDQI) is disordered.

It belongs to the class I-like SAM-binding methyltransferase superfamily. rRNA adenine N(6)-methyltransferase family. RsmA subfamily.

It is found in the cytoplasm. The enzyme catalyses adenosine(1518)/adenosine(1519) in 16S rRNA + 4 S-adenosyl-L-methionine = N(6)-dimethyladenosine(1518)/N(6)-dimethyladenosine(1519) in 16S rRNA + 4 S-adenosyl-L-homocysteine + 4 H(+). Functionally, specifically dimethylates two adjacent adenosines (A1518 and A1519) in the loop of a conserved hairpin near the 3'-end of 16S rRNA in the 30S particle. May play a critical role in biogenesis of 30S subunits. This Parasynechococcus marenigrum (strain WH8102) protein is Ribosomal RNA small subunit methyltransferase A.